A 393-amino-acid chain; its full sequence is ATP phosphoribosyltransferase regulatory subunit (393 aa).

It belongs to the class-II aminoacyl-tRNA synthetase family. HisZ subfamily. As to quaternary structure, heteromultimer composed of HisG and HisZ subunits.

It localises to the cytoplasm. It participates in amino-acid biosynthesis; L-histidine biosynthesis; L-histidine from 5-phospho-alpha-D-ribose 1-diphosphate: step 1/9. Functionally, required for the first step of histidine biosynthesis. May allow the feedback regulation of ATP phosphoribosyltransferase activity by histidine. The polypeptide is ATP phosphoribosyltransferase regulatory subunit (Synechococcus sp. (strain RCC307)).